A 320-amino-acid chain; its full sequence is Cytochrome f (320 aa).

The N-terminal stretch at 1-35 (MQTRNAFSWLKKQITRSISVSLMIYILTRTSISSA) is a signal peptide. Residues Tyr36, Cys56, Cys59, and His60 each contribute to the heme site. Residues 286-306 (VQGLLFFLASVILAQIFLVLK) traverse the membrane as a helical segment.

This sequence belongs to the cytochrome f family. As to quaternary structure, the 4 large subunits of the cytochrome b6-f complex are cytochrome b6, subunit IV (17 kDa polypeptide, petD), cytochrome f and the Rieske protein, while the 4 small subunits are PetG, PetL, PetM and PetN. The complex functions as a dimer. Requires heme as cofactor.

It localises to the plastid. The protein resides in the chloroplast thylakoid membrane. Functionally, component of the cytochrome b6-f complex, which mediates electron transfer between photosystem II (PSII) and photosystem I (PSI), cyclic electron flow around PSI, and state transitions. In Nicotiana sylvestris (Wood tobacco), this protein is Cytochrome f.